We begin with the raw amino-acid sequence, 83 residues long: Small ribosomal subunit protein uS19m (83 aa).

Belongs to the universal ribosomal protein uS19 family.

Its subcellular location is the mitochondrion. In Tetraselmis subcordiformis (Marine green alga), this protein is Small ribosomal subunit protein uS19m (RPS19).